A 292-amino-acid polypeptide reads, in one-letter code: 33 kDa chaperonin (292 aa).

Intrachain disulfides connect C230-C232 and C263-C266.

The protein belongs to the HSP33 family. Under oxidizing conditions two disulfide bonds are formed involving the reactive cysteines. Under reducing conditions zinc is bound to the reactive cysteines and the protein is inactive.

It localises to the cytoplasm. Its function is as follows. Redox regulated molecular chaperone. Protects both thermally unfolding and oxidatively damaged proteins from irreversible aggregation. Plays an important role in the bacterial defense system toward oxidative stress. The protein is 33 kDa chaperonin of Salmonella choleraesuis (strain SC-B67).